The following is a 563-amino-acid chain: Arginine--tRNA ligase (563 aa).

Positions 119-129 (ANPTGPLHVGR) match the 'HIGH' region motif.

The protein belongs to the class-I aminoacyl-tRNA synthetase family.

Its subcellular location is the cytoplasm. The enzyme catalyses tRNA(Arg) + L-arginine + ATP = L-arginyl-tRNA(Arg) + AMP + diphosphate. The sequence is that of Arginine--tRNA ligase from Methanocella arvoryzae (strain DSM 22066 / NBRC 105507 / MRE50).